We begin with the raw amino-acid sequence, 205 residues long: Holliday junction branch migration complex subunit RuvA (205 aa).

The segment at 1 to 64 is domain I; it reads MIGRLRGIIL…EDAQLLYGFN (64 aa). Residues 65 to 143 form a domain II region; the sequence is DKQERALFRE…GLNGDLFNNT (79 aa). The interval 144–156 is flexible linker; the sequence is GDIQLPASNSSQI. The interval 157-205 is domain III; the sequence is SDADIEAEAASALVALGYKPQEASRLVSKIAKPGADCETLIRDALRAAL.

Belongs to the RuvA family. In terms of assembly, homotetramer. Forms an RuvA(8)-RuvB(12)-Holliday junction (HJ) complex. HJ DNA is sandwiched between 2 RuvA tetramers; dsDNA enters through RuvA and exits via RuvB. An RuvB hexamer assembles on each DNA strand where it exits the tetramer. Each RuvB hexamer is contacted by two RuvA subunits (via domain III) on 2 adjacent RuvB subunits; this complex drives branch migration. In the full resolvosome a probable DNA-RuvA(4)-RuvB(12)-RuvC(2) complex forms which resolves the HJ.

It is found in the cytoplasm. Functionally, the RuvA-RuvB-RuvC complex processes Holliday junction (HJ) DNA during genetic recombination and DNA repair, while the RuvA-RuvB complex plays an important role in the rescue of blocked DNA replication forks via replication fork reversal (RFR). RuvA specifically binds to HJ cruciform DNA, conferring on it an open structure. The RuvB hexamer acts as an ATP-dependent pump, pulling dsDNA into and through the RuvAB complex. HJ branch migration allows RuvC to scan DNA until it finds its consensus sequence, where it cleaves and resolves the cruciform DNA. The chain is Holliday junction branch migration complex subunit RuvA from Yersinia enterocolitica serotype O:8 / biotype 1B (strain NCTC 13174 / 8081).